We begin with the raw amino-acid sequence, 401 residues long: Exodeoxyribonuclease 7 large subunit (401 aa).

The protein belongs to the XseA family. In terms of assembly, heterooligomer composed of large and small subunits.

Its subcellular location is the cytoplasm. The catalysed reaction is Exonucleolytic cleavage in either 5'- to 3'- or 3'- to 5'-direction to yield nucleoside 5'-phosphates.. In terms of biological role, bidirectionally degrades single-stranded DNA into large acid-insoluble oligonucleotides, which are then degraded further into small acid-soluble oligonucleotides. The protein is Exodeoxyribonuclease 7 large subunit of Thermoanaerobacter sp. (strain X514).